The sequence spans 730 residues: Translation factor GUF1 homolog, mitochondrial (730 aa).

Residues 106–289 (ELIRNFCIIA…AVVVSIPPPK (184 aa)) enclose the tr-type G domain. GTP-binding positions include 115-122 (AHVDHGKS), 182-186 (DTPGH), and 236-239 (NKID).

Belongs to the TRAFAC class translation factor GTPase superfamily. Classic translation factor GTPase family. LepA subfamily.

It is found in the mitochondrion inner membrane. The enzyme catalyses GTP + H2O = GDP + phosphate + H(+). Promotes mitochondrial protein synthesis. May act as a fidelity factor of the translation reaction, by catalyzing a one-codon backward translocation of tRNAs on improperly translocated ribosomes. Binds to mitochondrial ribosomes in a GTP-dependent manner. The protein is Translation factor GUF1 homolog, mitochondrial of Theileria annulata.